We begin with the raw amino-acid sequence, 680 residues long: Zinc finger protein 334 (680 aa).

The KRAB domain maps to 10 to 81 (VSFQDLTVNF…EEFSNQNYPD (72 aa)). 14 consecutive C2H2-type zinc fingers follow at residues 237–259 (NECN…QRIH), 265–287 (YVCS…RRIH), 293–315 (YECS…QKIH), 321–343 (YECN…FRSH), 349–371 (YECK…QRTH), 377–399 (NECK…QRIH), 405–427 (YECS…RRSH), 433–455 (YECS…QITH), 461–483 (YECN…QRTH), 544–566 (YECN…QRTH), 572–594 (YECN…QRTH), 600–622 (YECN…RRIH), 628–650 (YECN…QKIH), and 656–678 (YECN…QKSH).

The protein belongs to the krueppel C2H2-type zinc-finger protein family.

The protein resides in the nucleus. May be involved in transcriptional regulation. This Homo sapiens (Human) protein is Zinc finger protein 334 (ZNF334).